Reading from the N-terminus, the 1078-residue chain is Exportin-1 (1078 aa).

The 67-residue stretch at 34–100 (AQQVLTQFQA…RNYIVAVMIK (67 aa)) folds into the Importin N-terminal domain.

The protein belongs to the exportin family. In terms of assembly, interacts with php4.

The protein resides in the nucleus. In terms of biological role, receptor for the leucine-rich nuclear export signal (NES). The chain is Exportin-1 (xpo1) from Schizosaccharomyces pombe (strain 972 / ATCC 24843) (Fission yeast).